Reading from the N-terminus, the 237-residue chain is 2',3'-cyclic-nucleotide 3'-phosphodiesterase (237 aa).

Histidine 21 functions as the Proton donor/acceptor in the catalytic mechanism. Threonine 23 provides a ligand contact to substrate. Residues 117–137 form a disordered region; the sequence is HLYTTDSHGNTVKKKSKQSQD. The active-site Proton donor/acceptor is the histidine 167. Substrate contacts are provided by serine 169 and tyrosine 172.

It belongs to the 2H phosphoesterase superfamily. CPD1 family.

It is found in the golgi apparatus. It carries out the reaction a nucleoside 2',3'-cyclic phosphate + H2O = a nucleoside 2'-phosphate + H(+). In terms of biological role, involved in the metabolism of ADP-ribose 1',2'-cyclic phosphate which is produced as a consequence of tRNA splicing. The sequence is that of 2',3'-cyclic-nucleotide 3'-phosphodiesterase (CPD1) from Debaryomyces hansenii (strain ATCC 36239 / CBS 767 / BCRC 21394 / JCM 1990 / NBRC 0083 / IGC 2968) (Yeast).